A 283-amino-acid polypeptide reads, in one-letter code: HTH-type transcriptional activator RhaR (283 aa).

Residues 179 to 277 (DLLMAALGNS…GVTPRVWRQQ (99 aa)) enclose the HTH araC/xylS-type domain. 2 DNA-binding regions (H-T-H motif) span residues 196 to 217 (QHFC…RQQT) and 244 to 267 (ISEI…TRET).

Binds DNA as a dimer.

The protein resides in the cytoplasm. Activates expression of the rhaSR operon in response to L-rhamnose. The polypeptide is HTH-type transcriptional activator RhaR (Cronobacter sakazakii (strain ATCC BAA-894) (Enterobacter sakazakii)).